A 112-amino-acid polypeptide reads, in one-letter code: Protein NIM1-INTERACTING 3 (112 aa).

Disordered stretches follow at residues 1–20 (MDRD…EEKM) and 77–112 (EKAA…NLSL). Coiled coils occupy residues 1-35 (MDRD…EMRK) and 69-96 (NKAE…SKEK). The span at 77-89 (EKAANESSSASNE) shows a compositional bias: low complexity.

It belongs to the NPR1-interactor family. Interacts with NPR1 C-terminal region.

Its subcellular location is the nucleus. The chain is Protein NIM1-INTERACTING 3 from Arabidopsis thaliana (Mouse-ear cress).